A 294-amino-acid chain; its full sequence is Very long chain fatty acid elongase 5 (294 aa).

7 helical membrane-spanning segments follow: residues 26-46 (WLLL…LLIV), 64-84 (ILVV…YELV), 112-132 (VLWW…FFIL), 141-161 (FLHI…MNWV), 172-192 (FNSF…IPAI), 207-227 (LVQF…PCGF), and 231-251 (WLYF…NFYI). A disordered region spans residues 261–294 (AKKDPRHNGIKSVNGHSNGASHTNAVKNRKARTD). Residues 274–286 (NGHSNGASHTNAV) show a composition bias toward polar residues.

It belongs to the ELO family. ELOVL5 subfamily. In terms of tissue distribution, expression is highest in intestine, followed by brain and heart, and lowest in gill. Also expressed in liver, spleen and muscle.

The protein localises to the endoplasmic reticulum membrane. It is found in the cell projection. Its subcellular location is the dendrite. The catalysed reaction is a very-long-chain acyl-CoA + malonyl-CoA + H(+) = a very-long-chain 3-oxoacyl-CoA + CO2 + CoA. The enzyme catalyses (6Z,9Z,12Z)-octadecatrienoyl-CoA + malonyl-CoA + H(+) = (8Z,11Z,14Z)-3-oxoeicosatrienoyl-CoA + CO2 + CoA. It carries out the reaction (9Z,12Z,15Z)-octadecatrienoyl-CoA + malonyl-CoA + H(+) = (11Z,14Z,17Z)-3-oxoeicosatrienoyl-CoA + CO2 + CoA. It catalyses the reaction (9Z)-hexadecenoyl-CoA + malonyl-CoA + H(+) = 3-oxo-(11Z)-octadecenoyl-CoA + CO2 + CoA. The catalysed reaction is (9Z)-octadecenoyl-CoA + malonyl-CoA + H(+) = 3-oxo-(11Z)-eicosenoyl-CoA + CO2 + CoA. The enzyme catalyses (11Z)-octadecenoyl-CoA + malonyl-CoA + H(+) = 3-oxo-(13Z)-eicosenoyl-CoA + CO2 + CoA. It carries out the reaction (9Z,12Z)-octadecadienoyl-CoA + malonyl-CoA + H(+) = (11Z,14Z)-3-oxoicosa-11,14-dienoyl-CoA + CO2 + CoA. It catalyses the reaction (6Z,9Z,12Z,15Z)-octadecatetraenoyl-CoA + malonyl-CoA + H(+) = (8Z,11Z,14Z,17Z)-3-oxoicosatetraenoyl-CoA + CO2 + CoA. The catalysed reaction is (5Z,8Z,11Z,14Z)-eicosatetraenoyl-CoA + malonyl-CoA + H(+) = (7Z,10Z,13Z,16Z)-3-oxodocosatetraenoyl-CoA + CO2 + CoA. The enzyme catalyses (5Z,8Z,11Z,14Z,17Z)-eicosapentaenoyl-CoA + malonyl-CoA + H(+) = 3-oxo-(7Z,10Z,13Z,16Z,19Z)-docosapentaenoyl-CoA + CO2 + CoA. It participates in lipid metabolism; polyunsaturated fatty acid biosynthesis. In terms of biological role, catalyzes the first and rate-limiting reaction of the four reactions that constitute the long-chain fatty acids elongation cycle. This endoplasmic reticulum-bound enzymatic process allows the addition of 2 carbons to the chain of long- and very long-chain fatty acids (VLCFAs) per cycle. Condensing enzyme that acts specifically toward polyunsaturated acyl-CoA with the higher activity toward C18:3(n-6) acyl-CoA. May participate in the production of monounsaturated and of polyunsaturated VLCFAs of different chain lengths that are involved in multiple biological processes as precursors of membrane lipids and lipid mediators. In conditions where the essential linoleic and alpha linoleic fatty acids are lacking it is also involved in the synthesis of Mead acid from oleic acid. This is Very long chain fatty acid elongase 5 from Tachysurus fulvidraco (Yellow catfish).